The following is a 1096-amino-acid chain: MAAPVPPGAYRPNNNQQNSGGPPNFVPGSQGNPNSLAANMQNLNINRPPPPMPGSGPRPSPPFGQSPQSFPQQQQQQPRPSPMARPGPPPPAAMARPGGPPQVSQPGGFPPVGRPVAPPSNQPPFGGRPSTGPLVGGGSSFPQPGGFPASGPPGGVPSGPPSGARPIGFGSPPPMGPGMSMPPPSGMPGGPLSNGPPPSGMHGGHLSNGPPPSGMPGGPLSNGPPPPMMGPGAFPRGSQFTSGPMMAPPPPYGQPPNAGPFTGNSPLSSPPAHSIPPPTNFPGVPYGRPPMPGGFPYGAPPQQLPSAPGTPGSIYGMGPMQNQSMTSVSSPSKIDLNQIPRPGSSSSPIVYETRVENKANPPPPTTVDYITRDTGNSSPRYMRCTINQIPCTVDLLSTSGMQLALIVQPMALSHPSEEPIQVVDFGESGPVRCSRCKGYVNPFMKFIDQGRKFICNLCGYTDETPRDYQCNLGPDGRRRDADERPELCRGTVDFVATKEYMVRDPMPAVYFFLIDVSMNAIQTGATAAACSAIQQVLSDLPEGPRTFVGIATFDSTIHFYNLKRALQQPLMLIVPDVQDVYTPLETDVIVQLSECRQHLEILLESIPTMFQESKSPESAFGAAVKAAFLAMKSTGGKLMVFQSVLPSVGIGALSSREADGRANASAGEKEAHKLLQPADKTLRTMAIEFAEYQVCVDLFITTQAYVDMASISEIPRTTGGQVYCYYPFSALSDPPKLYNDLRWNITRPQGFEAVMRVRCSQGIQVQEYSGNFCKRIPTDIDLPAIDCDKAIMVTLKHDDKLQDGAECGFQCALLYTTISGERRIRVLNLSIPCTNMLSNLFRSADLDSQFACMLKQAANEIPSKALPLVKEQATNDCITILHSYRKFCATVTSTGQLILPEALKLLPLYTLALTKGVGLRMDGRIDDRSFWINHVSSLSTPLAIPLVYPRMIAVHDLDANDNEENVVPCPIPLQSEHLSDEGVYFLENGEDGLIYIGESVNSDILQKLFNVRSAAELPSQYVLQKYDNQLSKKFNDVVNEIRRQRSSYLRIKLCKKGDPAGNMLFQSYMVEDRGSGGASYVDFLVSVHRQIQHKLN.

Positions Met-1–Tyr-315 are disordered. Residues Pro-12–Pro-23 show a composition bias toward low complexity. Over residues Pro-27–Ile-45 the composition is skewed to polar residues. The segment covering Arg-47–Gly-64 has biased composition (pro residues). Residues Gln-65 to Pro-78 are compositionally biased toward low complexity. A compositionally biased stretch (pro residues) spans Arg-79–Ala-92. Low complexity predominate over residues Ala-93–Gly-107. Pro residues predominate over residues Gly-108–Gln-122. Over residues Ser-140 to Ala-149 the composition is skewed to low complexity. 4 stretches are compositionally biased toward pro residues: residues Ser-150–Pro-160, Ser-171–Gly-186, Met-246–Ala-258, and Gly-287–Gln-303. The Zn(2+) site is built by Cys-433, Cys-436, Cys-455, and Cys-458. Residues Cys-433–Cys-458 form a zinc finger-like region.

Belongs to the SEC23/SEC24 family. SEC24 subfamily. As to quaternary structure, component of the coat protein complex II (COPII), composed of at least five proteins: the Sec23/24 complex, the Sec13/31 complex and Sar1. As to expression, mainly expressed in pollen, roots, stems, petioles and hypocotyls, and, to a lower extent, in leaves and cotyledons.

It localises to the cytoplasmic vesicle. It is found in the COPII-coated vesicle membrane. The protein localises to the endoplasmic reticulum membrane. The protein resides in the golgi apparatus membrane. Functionally, component of the coat protein complex II (COPII), that covers ER-derived vesicles involved in transport from the endoplasmic reticulum to the Golgi apparatus. COPII is composed of at least five proteins: the SEC23/24 complex, the SEC13/31 complex, and the protein SAR1. Acts in the cytoplasm to promote the transport of secretory, plasma membrane, and vacuolar proteins from the endoplasmic reticulum to the Golgi complex. This Arabidopsis thaliana (Mouse-ear cress) protein is Protein transport protein SEC24 B.